Here is a 191-residue protein sequence, read N- to C-terminus: UPF0149 protein VV2847 (191 aa).

The protein belongs to the UPF0149 family.

This is UPF0149 protein VV2847 from Vibrio vulnificus (strain YJ016).